Reading from the N-terminus, the 518-residue chain is Alpha-ionylideneethane synthase abl3 (518 aa).

Disordered regions lie at residues Ala-294–Glu-355 and Lys-440–Lys-466. Over residues Thr-299–Asp-339 the composition is skewed to low complexity.

This sequence belongs to the alpha-ionylideneethane synthase family.

Its pathway is hormone biosynthesis. Functionally, alpha-ionylideneethane synthase involved in the biosynthesis of abscisic acid (ABA), a phytohormone that acts antagonistically toward salicylic acid (SA), jasmonic acid (JA) and ethylene (ETH) signaling, to impede plant defense responses. During pathogen-host interaction, ABA plays a dual role in disease severity by increasing plant susceptibility and accelerating pathogenesis in the fungus itself. The first step of the pathway catalyzes the reaction from farnesyl diphosphate to alpha-ionylideneethane performed by the alpha-ionylideneethane synthase ABA3 via a three-step reaction mechanism involving 2 neutral intermediates, beta-farnesene and allofarnesene. The cytochrome P450 monooxygenase ABA1 might then be involved in the conversion of alpha-ionylideneethane to alpha-ionylideneacetic acid. Alpha-ionylideneacetic acid is further converted to abscisic acid in 2 steps involving the cytochrome P450 monooxygenase ABA2 and the short-chain dehydrogenase/reductase ABA4, via the intermediates 1'-deoxy-ABA or 1',4'-trans-diol-ABA, depending on the order of action of these 2 enzymes. ABA2 is responsible for the hydroxylation of carbon atom C-1' and ABA4 might be involved in the oxidation of the C-4' carbon atom. The sequence is that of Alpha-ionylideneethane synthase abl3 from Pyricularia oryzae (strain Y34) (Rice blast fungus).